A 409-amino-acid polypeptide reads, in one-letter code: Astacin-like metalloendopeptidase (409 aa).

The N-terminal stretch at 1-19 (MDLKMLLIFTAFLLPAVLG) is a signal peptide. Positions 20–86 (FPIQDNYENS…EGDIVPRRSR (67 aa)) are excised as a propeptide. Positions 30–42 (TATSESTQVTTEE) are enriched in low complexity. Positions 30 to 55 (TATSESTQVTTEESIYDSPSPTETDS) are disordered. The 199-residue stretch at 87-285 (SAFNCRNCYW…AKINKLYNCS (199 aa)) folds into the Peptidase M12A domain. Cystine bridges form between Cys91/Cys94, Cys134/Cys284, Cys155/Cys175, Cys287/Cys313, and Cys339/Cys362. His183 serves as a coordination point for Zn(2+). Residue Glu184 is part of the active site. Zn(2+) is bound by residues His187 and His193. The region spanning 287-399 (CSTIIDAAFG…SGFQATFTSA (113 aa)) is the CUB domain.

Requires Zn(2+) as cofactor.

The protein localises to the cytoplasm. It localises to the cell membrane. It is found in the cytoplasmic vesicle. The protein resides in the secretory vesicle. Its subcellular location is the cortical granule. Functionally, probable oocyte-specific oolemmal receptor involved in sperm and egg adhesion and fertilization. Protease which may play a role in the breaking down of the vitelline membrane (days 0-5) and possibly, in the digestion of the egg white (days 9-12). The chain is Astacin-like metalloendopeptidase from Coturnix japonica (Japanese quail).